The chain runs to 122 residues: Ubiquitin-related modifier 1 (122 aa).

Over residues 33 to 48 the composition is skewed to polar residues; it reads PSTVPADNNTSVTTKD. The interval 33–52 is disordered; it reads PSTVPADNNTSVTTKDAASP. Glycine 122 is modified (1-thioglycine). Residue glycine 122 forms a Glycyl lysine isopeptide (Gly-Lys) (interchain with K-? in acceptor proteins) linkage.

It belongs to the URM1 family. Post-translationally, C-terminal thiocarboxylation occurs in 2 steps, it is first acyl-adenylated (-COAMP) via the hesA/moeB/thiF part of UBA4, then thiocarboxylated (-COSH) via the rhodanese domain of UBA4.

Its subcellular location is the cytoplasm. It participates in tRNA modification; 5-methoxycarbonylmethyl-2-thiouridine-tRNA biosynthesis. Functionally, acts as a sulfur carrier required for 2-thiolation of mcm(5)S(2)U at tRNA wobble positions of cytosolic tRNA(Lys), tRNA(Glu) and tRNA(Gln). Serves as sulfur donor in tRNA 2-thiolation reaction by being thiocarboxylated (-COSH) at its C-terminus by the MOCS3 homolog UBA4. The sulfur is then transferred to tRNA to form 2-thiolation of mcm(5)S(2)U. Prior mcm(5) tRNA modification by the elongator complex is required for 2-thiolation. Also acts as a ubiquitin-like protein (UBL) that is covalently conjugated via an isopeptide bond to lysine residues of target proteins such as AHP1. The thiocarboxylated form serves as substrate for conjugation and oxidative stress specifically induces the formation of UBL-protein conjugates. In Laccaria bicolor (strain S238N-H82 / ATCC MYA-4686) (Bicoloured deceiver), this protein is Ubiquitin-related modifier 1.